We begin with the raw amino-acid sequence, 251 residues long: Diphthine synthase (251 aa).

Residues leucine 9, aspartate 84, valine 87, 112–113 (SI), leucine 160, alanine 194, and histidine 219 each bind S-adenosyl-L-methionine.

The protein belongs to the diphthine synthase family. In terms of assembly, homodimer.

It carries out the reaction 2-[(3S)-amino-3-carboxypropyl]-L-histidyl-[translation elongation factor 2] + 3 S-adenosyl-L-methionine = diphthine-[translation elongation factor 2] + 3 S-adenosyl-L-homocysteine + 3 H(+). Its pathway is protein modification; peptidyl-diphthamide biosynthesis. Functionally, S-adenosyl-L-methionine-dependent methyltransferase that catalyzes the trimethylation of the amino group of the modified target histidine residue in translation elongation factor 2 (EF-2), to form an intermediate called diphthine. The three successive methylation reactions represent the second step of diphthamide biosynthesis. This is Diphthine synthase from Archaeoglobus fulgidus (strain ATCC 49558 / DSM 4304 / JCM 9628 / NBRC 100126 / VC-16).